A 326-amino-acid polypeptide reads, in one-letter code: L-lactate dehydrogenase (326 aa).

NAD(+) is bound by residues V26, D47, K52, Y78, and 92 to 93; that span reads GA. The substrate site is built by Q95 and R101. NAD(+) contacts are provided by residues T114, 131-133, and S156; that span reads ASN. Position 133 to 136 (133 to 136) interacts with substrate; the sequence is NPVD. 161 to 164 is a binding site for substrate; the sequence is DTAR. The beta-D-fructose 1,6-bisphosphate site is built by R166 and H181. The active-site Proton acceptor is the H188. Y233 carries the phosphotyrosine modification. T242 serves as a coordination point for substrate.

The protein belongs to the LDH/MDH superfamily. LDH family. As to quaternary structure, homotetramer.

It localises to the cytoplasm. The enzyme catalyses (S)-lactate + NAD(+) = pyruvate + NADH + H(+). The protein operates within fermentation; pyruvate fermentation to lactate; (S)-lactate from pyruvate: step 1/1. With respect to regulation, allosterically activated by fructose 1,6-bisphosphate (FBP). Functionally, catalyzes the conversion of lactate to pyruvate. The chain is L-lactate dehydrogenase from Corynebacterium jeikeium (strain K411).